Consider the following 600-residue polypeptide: 1-deoxy-D-xylulose-5-phosphate synthase (600 aa).

Residues His63 and 104–106 (GHS) contribute to the thiamine diphosphate site. Asp135 is a Mg(2+) binding site. Residues 136-137 (GA), Asn164, Tyr271, and Glu352 contribute to the thiamine diphosphate site. Residue Asn164 coordinates Mg(2+).

The protein belongs to the transketolase family. DXPS subfamily. Homodimer. Mg(2+) serves as cofactor. Requires thiamine diphosphate as cofactor.

It catalyses the reaction D-glyceraldehyde 3-phosphate + pyruvate + H(+) = 1-deoxy-D-xylulose 5-phosphate + CO2. Its pathway is metabolic intermediate biosynthesis; 1-deoxy-D-xylulose 5-phosphate biosynthesis; 1-deoxy-D-xylulose 5-phosphate from D-glyceraldehyde 3-phosphate and pyruvate: step 1/1. Functionally, catalyzes the acyloin condensation reaction between C atoms 2 and 3 of pyruvate and glyceraldehyde 3-phosphate to yield 1-deoxy-D-xylulose-5-phosphate (DXP). The protein is 1-deoxy-D-xylulose-5-phosphate synthase of Campylobacter fetus subsp. fetus (strain 82-40).